Reading from the N-terminus, the 129-residue chain is Small ribosomal subunit protein uS9 (129 aa).

It belongs to the universal ribosomal protein uS9 family.

The sequence is that of Small ribosomal subunit protein uS9 from Chlorobium luteolum (strain DSM 273 / BCRC 81028 / 2530) (Pelodictyon luteolum).